A 546-amino-acid polypeptide reads, in one-letter code: MLVDELCRLYSIIKTILNYGLSDFVPTHRLIFPLRIGSRFLLRVLNKHSQLTLGERFRLALQELGPIWIKFGQMLSTRRDIFPDSVADQLSILQDRVAPFDGIIAKMCIERAIGNSLETWFKDFQEIPLASASISQVHSARLKKNNKDIVIKIIRPGLLPVIKIDICLMYRLAKWICKFLPEGRKFKFSEVVSEYEKTLFNELNLLKETANTIQLRRNFKKSQILYIPKVYVDFCSENVMVMERIYGIPVYNLVALKKQKTNMKLLAERGIEIFFTQVFRDSFFHGDMHPGNIFISYKHPGNPKYISVDCGIVGSLNKKDKYYLAANFIAFFNHDYRKIAELHLDSGWIPLDTNIEDFECAMRTVFEPIFEQPLEKIPFSKILLYLFNTARYFNMEIQPQLILLQKTLLYIEGIVRQLYPNLNLWKSAQPFLERWMRDQLKLSTTICALKDKIPHWIDKIPELPNLLSHEFKRSCMLQKKIEILIRELRTQRTNHGQALFLFGVGATLVTSSIFLYIQDKYLKIFSIFLFVIGIFIWTIGWKRIIQ.

The region spanning 123–501 (DFQEIPLASA…RTNHGQALFL (379 aa)) is the Protein kinase domain. Residues 129–137 (LASASISQV) and Lys152 each bind ATP. Asp287 serves as the catalytic Proton acceptor. 2 helical membrane-spanning segments follow: residues 497-517 (QALF…FLYI) and 521-541 (YLKI…TIGW).

It belongs to the ABC1 family. UbiB subfamily.

It localises to the cell inner membrane. It functions in the pathway cofactor biosynthesis; ubiquinone biosynthesis [regulation]. In terms of biological role, is probably a protein kinase regulator of UbiI activity which is involved in aerobic coenzyme Q (ubiquinone) biosynthesis. The sequence is that of Probable protein kinase UbiB from Blochmanniella pennsylvanica (strain BPEN).